The primary structure comprises 330 residues: MKKIAVDAMGGDYAPQAIVEGVNQALSDFSDIEVQLYGDEAKIKQYLTATERVSIIHTDEKIDSDDEPTRAIRNKKNASMVLAAKAVKDGEADAVLSAGNTGALLAAGFFIVGRIKNIDRPGLMSTLPTVDGKGFDMLDLGANAENTAQHLHQYAVLGSFYAKNVRGIAQPRVGLLNNGTESSKGDPLRKETYELLVADESLNFIGNVEARDLMNGVADVVVADGFTGNAVLKSIEGTAMGIMGLLKTAITGGGLRAKLGALLLKDSLRGLKKQLNYSDVGGAVLFGVKAPVVKTHGSSDAKAVYSTIRQIRTMLETDVVAQTAREFSGE.

It belongs to the PlsX family. Homodimer. Probably interacts with PlsY.

It localises to the cytoplasm. It catalyses the reaction a fatty acyl-[ACP] + phosphate = an acyl phosphate + holo-[ACP]. Its pathway is lipid metabolism; phospholipid metabolism. Functionally, catalyzes the reversible formation of acyl-phosphate (acyl-PO(4)) from acyl-[acyl-carrier-protein] (acyl-ACP). This enzyme utilizes acyl-ACP as fatty acyl donor, but not acyl-CoA. This chain is Phosphate acyltransferase, found in Streptococcus pneumoniae (strain 70585).